We begin with the raw amino-acid sequence, 339 residues long: DNA-directed RNA polymerase subunit alpha (339 aa).

The tract at residues M1–E233 is alpha N-terminal domain (alpha-NTD). Positions K264–L339 are alpha C-terminal domain (alpha-CTD).

Belongs to the RNA polymerase alpha chain family. In plastids the minimal PEP RNA polymerase catalytic core is composed of four subunits: alpha, beta, beta', and beta''. When a (nuclear-encoded) sigma factor is associated with the core the holoenzyme is formed, which can initiate transcription.

It localises to the plastid. The protein resides in the chloroplast. It carries out the reaction RNA(n) + a ribonucleoside 5'-triphosphate = RNA(n+1) + diphosphate. Its function is as follows. DNA-dependent RNA polymerase catalyzes the transcription of DNA into RNA using the four ribonucleoside triphosphates as substrates. This is DNA-directed RNA polymerase subunit alpha from Zea mays (Maize).